The chain runs to 244 residues: Myosin-7 (244 aa).

The interval 1–244 (VEQTERSRKL…DIGTKGLNEE (244 aa)) is rodlike tail (S2 and LMM domains). A coiled-coil region spans residues 1–244 (VEQTERSRKL…DIGTKGLNEE (244 aa)). The tract at residues 216–244 (EERADIAESQVNKLRAKSRDIGTKGLNEE) is disordered. Residues 232–244 (KSRDIGTKGLNEE) are compositionally biased toward basic and acidic residues.

In terms of assembly, muscle myosin is a hexameric protein that consists of 2 heavy chain subunits (MHC), 2 alkali light chain subunits (MLC) and 2 regulatory light chain subunits (MLC-2). Interacts with ECPAS. Interacts (via C-terminus) with LRRC39.

Its subcellular location is the cytoplasm. It localises to the myofibril. It is found in the sarcomere. In terms of biological role, myosins are actin-based motor molecules with ATPase activity essential for muscle contraction. Forms regular bipolar thick filaments that, together with actin thin filaments, constitute the fundamental contractile unit of skeletal and cardiac muscle. The sequence is that of Myosin-7 (MYH7) from Papio hamadryas (Hamadryas baboon).